We begin with the raw amino-acid sequence, 221 residues long: Thymine/uracil-DNA glycosylase (221 aa).

The region spanning 105–133 (DYGGRVPRNRKAILDLPGVGKYTCAAVMC) is the HhH domain. Cysteine 197, cysteine 204, cysteine 207, and cysteine 213 together coordinate [4Fe-4S] cluster.

It belongs to the Nth/MutY family. It depends on [4Fe-4S] cluster as a cofactor.

The enzyme catalyses Hydrolyzes mismatched double-stranded DNA and polynucleotides, releasing free thymine.. Its function is as follows. DNA glycosylase that excises thymine from T/G mismatches and uracil from U/G mismatches. Acts as a repair enzyme able to counteract the mutagenic effect of spontaneous hydrolytic deamination of DNA 5-methylcytosine (5-meC) residues that leads to the formation of T/G mismatches. May also repair U/G mismatches arising from hydrolytic deamination of DNA cytosine residues. G/G, A/G, T/C and U/C are minor substrates. The protein is Thymine/uracil-DNA glycosylase of Methanothermobacter thermautotrophicus (Methanobacterium thermoformicicum).